The sequence spans 55 residues: Large ribosomal subunit protein bL33 (55 aa).

It belongs to the bacterial ribosomal protein bL33 family.

The polypeptide is Large ribosomal subunit protein bL33 (Wigglesworthia glossinidia brevipalpis).